The primary structure comprises 158 residues: NADH-quinone oxidoreductase subunit B (158 aa).

Residues cysteine 37, cysteine 38, cysteine 102, and cysteine 132 each coordinate [4Fe-4S] cluster.

The protein belongs to the complex I 20 kDa subunit family. In terms of assembly, NDH-1 is composed of 14 different subunits. Subunits NuoB, C, D, E, F, and G constitute the peripheral sector of the complex. [4Fe-4S] cluster is required as a cofactor.

Its subcellular location is the cell inner membrane. It catalyses the reaction a quinone + NADH + 5 H(+)(in) = a quinol + NAD(+) + 4 H(+)(out). NDH-1 shuttles electrons from NADH, via FMN and iron-sulfur (Fe-S) centers, to quinones in the respiratory chain. Couples the redox reaction to proton translocation (for every two electrons transferred, four hydrogen ions are translocated across the cytoplasmic membrane), and thus conserves the redox energy in a proton gradient. This chain is NADH-quinone oxidoreductase subunit B, found in Aromatoleum aromaticum (strain DSM 19018 / LMG 30748 / EbN1) (Azoarcus sp. (strain EbN1)).